We begin with the raw amino-acid sequence, 128 residues long: Iron-sulfur cluster insertion protein ErpA 1 (128 aa).

Positions 47, 111, and 113 each coordinate iron-sulfur cluster.

Belongs to the HesB/IscA family. Homodimer. Requires iron-sulfur cluster as cofactor.

Required for insertion of 4Fe-4S clusters for at least IspG. This is Iron-sulfur cluster insertion protein ErpA 1 from Methylococcus capsulatus (strain ATCC 33009 / NCIMB 11132 / Bath).